A 1419-amino-acid polypeptide reads, in one-letter code: L-2-aminoadipate reductase (1419 aa).

Residues 880-956 enclose the Carrier domain; it reads ETLTATERDI…GLAKEIERMK (77 aa). Serine 916 is subject to O-(pantetheine 4'-phosphoryl)serine.

The protein belongs to the ATP-dependent AMP-binding enzyme family. It depends on pantetheine 4'-phosphate as a cofactor.

The protein resides in the cytoplasm. The enzyme catalyses (S)-2-amino-6-oxohexanoate + NADP(+) + H2O = L-2-aminoadipate + NADPH + 2 H(+). The catalysed reaction is (S)-2-amino-6-oxohexanoate + NAD(+) + H2O = L-2-aminoadipate + NADH + 2 H(+). It catalyses the reaction (S)-2-amino-6-oxohexanoate + AMP + diphosphate + NADP(+) = L-2-aminoadipate + ATP + NADPH + H(+). The protein operates within amino-acid biosynthesis; L-lysine biosynthesis via AAA pathway; L-lysine from L-alpha-aminoadipate (fungal route): step 1/3. Its function is as follows. Catalyzes the activation of alpha-aminoadipate by ATP-dependent adenylation and the reduction of activated alpha-aminoadipate by NADPH. The activated alpha-aminoadipate is bound to the phosphopantheinyl group of the enzyme itself before it is reduced to (S)-2-amino-6-oxohexanoate. The chain is L-2-aminoadipate reductase (lys1) from Schizosaccharomyces pombe (strain 972 / ATCC 24843) (Fission yeast).